The chain runs to 37 residues: Cytochrome b6-f complex subunit 5 (37 aa).

A helical membrane pass occupies residues 5–25 (LLSGIVLGLIVVTLAGLFYAA).

Belongs to the PetG family. The 4 large subunits of the cytochrome b6-f complex are cytochrome b6, subunit IV (17 kDa polypeptide, PetD), cytochrome f and the Rieske protein, while the 4 small subunits are PetG, PetL, PetM and PetN. The complex functions as a dimer.

The protein resides in the cellular thylakoid membrane. Its function is as follows. Component of the cytochrome b6-f complex, which mediates electron transfer between photosystem II (PSII) and photosystem I (PSI), cyclic electron flow around PSI, and state transitions. PetG is required for either the stability or assembly of the cytochrome b6-f complex. This Anabaena variabilis protein is Cytochrome b6-f complex subunit 5.